Here is a 343-residue protein sequence, read N- to C-terminus: Small ribosomal subunit biogenesis GTPase RsgA (343 aa).

The 160-residue stretch at 116–275 folds into the CP-type G domain; the sequence is RGQLKPVAAN…LIDSPGIREF (160 aa). GTP contacts are provided by residues 163-166 and 217-225; these read NKAD and GQSGVGKSS. Residues cysteine 299, cysteine 304, histidine 306, and cysteine 312 each contribute to the Zn(2+) site.

Belongs to the TRAFAC class YlqF/YawG GTPase family. RsgA subfamily. Monomer. Associates with 30S ribosomal subunit, binds 16S rRNA. It depends on Zn(2+) as a cofactor.

Its subcellular location is the cytoplasm. One of several proteins that assist in the late maturation steps of the functional core of the 30S ribosomal subunit. Helps release RbfA from mature subunits. May play a role in the assembly of ribosomal proteins into the subunit. Circularly permuted GTPase that catalyzes slow GTP hydrolysis, GTPase activity is stimulated by the 30S ribosomal subunit. This Pseudomonas savastanoi pv. phaseolicola (strain 1448A / Race 6) (Pseudomonas syringae pv. phaseolicola (strain 1448A / Race 6)) protein is Small ribosomal subunit biogenesis GTPase RsgA.